We begin with the raw amino-acid sequence, 178 residues long: Probable chorismate pyruvate-lyase (178 aa).

Substrate-binding residues include Met-37, Arg-78, Leu-114, and Glu-165.

Belongs to the UbiC family.

It is found in the cytoplasm. The enzyme catalyses chorismate = 4-hydroxybenzoate + pyruvate. It participates in cofactor biosynthesis; ubiquinone biosynthesis. Its function is as follows. Removes the pyruvyl group from chorismate, with concomitant aromatization of the ring, to provide 4-hydroxybenzoate (4HB) for the ubiquinone pathway. The protein is Probable chorismate pyruvate-lyase of Aeromonas salmonicida (strain A449).